A 1394-amino-acid polypeptide reads, in one-letter code: DNA-directed RNA polymerase subunit beta'' (1394 aa).

Zn(2+) contacts are provided by Cys224, Cys295, Cys302, and Cys305.

Belongs to the RNA polymerase beta' chain family. RpoC2 subfamily. As to quaternary structure, in plastids the minimal PEP RNA polymerase catalytic core is composed of four subunits: alpha, beta, beta', and beta''. When a (nuclear-encoded) sigma factor is associated with the core the holoenzyme is formed, which can initiate transcription. It depends on Zn(2+) as a cofactor.

The protein resides in the plastid. It is found in the chloroplast. It catalyses the reaction RNA(n) + a ribonucleoside 5'-triphosphate = RNA(n+1) + diphosphate. Functionally, DNA-dependent RNA polymerase catalyzes the transcription of DNA into RNA using the four ribonucleoside triphosphates as substrates. This chain is DNA-directed RNA polymerase subunit beta'', found in Vitis vinifera (Grape).